Consider the following 174-residue polypeptide: Adenylate kinase (174 aa).

Residues 12–41 (STGDMLRAAIKAGTPLGLEAKKIIDEGGLV) form an NMP region. AMP-binding positions include Thr-13, Arg-18, 39–41 (GLV), 67–70 (GFPR), and Gln-74. Positions 104–141 (GRRVHLASGRTYHVTYNPPKVEGKDDVTGEDLIQRDDD) are LID. Residues Arg-105 and 114 to 115 (TY) contribute to the ATP site. Positions 138 and 149 each coordinate AMP.

Belongs to the adenylate kinase family. As to quaternary structure, monomer.

It is found in the cytoplasm. The enzyme catalyses AMP + ATP = 2 ADP. It participates in purine metabolism; AMP biosynthesis via salvage pathway; AMP from ADP: step 1/1. Catalyzes the reversible transfer of the terminal phosphate group between ATP and AMP. Plays an important role in cellular energy homeostasis and in adenine nucleotide metabolism. The sequence is that of Adenylate kinase from Neisseria lactamica.